The chain runs to 227 residues: Cytochrome c oxidase subunit 2 (227 aa).

Topologically, residues methionine 1–serine 14 are mitochondrial intermembrane. A helical transmembrane segment spans residues proline 15 to methionine 45. Residues leucine 46–glutamine 59 lie on the Mitochondrial matrix side of the membrane. The chain crosses the membrane as a helical span at residues glutamate 60–methionine 87. Residues aspartate 88 to alanine 227 are Mitochondrial intermembrane-facing. Histidine 161, cysteine 196, glutamate 198, cysteine 200, histidine 204, and methionine 207 together coordinate Cu cation. Glutamate 198 contacts Mg(2+). A Phosphotyrosine modification is found at tyrosine 218.

It belongs to the cytochrome c oxidase subunit 2 family. In terms of assembly, component of the cytochrome c oxidase (complex IV, CIV), a multisubunit enzyme composed of 14 subunits. The complex is composed of a catalytic core of 3 subunits MT-CO1, MT-CO2 and MT-CO3, encoded in the mitochondrial DNA, and 11 supernumerary subunits COX4I, COX5A, COX5B, COX6A, COX6B, COX6C, COX7A, COX7B, COX7C, COX8 and NDUFA4, which are encoded in the nuclear genome. The complex exists as a monomer or a dimer and forms supercomplexes (SCs) in the inner mitochondrial membrane with NADH-ubiquinone oxidoreductase (complex I, CI) and ubiquinol-cytochrome c oxidoreductase (cytochrome b-c1 complex, complex III, CIII), resulting in different assemblies (supercomplex SCI(1)III(2)IV(1) and megacomplex MCI(2)III(2)IV(2)). Found in a complex with TMEM177, COA6, COX18, COX20, SCO1 and SCO2. Interacts with TMEM177 in a COX20-dependent manner. Interacts with COX20. Interacts with COX16. The cofactor is Cu cation.

The protein localises to the mitochondrion inner membrane. The enzyme catalyses 4 Fe(II)-[cytochrome c] + O2 + 8 H(+)(in) = 4 Fe(III)-[cytochrome c] + 2 H2O + 4 H(+)(out). Component of the cytochrome c oxidase, the last enzyme in the mitochondrial electron transport chain which drives oxidative phosphorylation. The respiratory chain contains 3 multisubunit complexes succinate dehydrogenase (complex II, CII), ubiquinol-cytochrome c oxidoreductase (cytochrome b-c1 complex, complex III, CIII) and cytochrome c oxidase (complex IV, CIV), that cooperate to transfer electrons derived from NADH and succinate to molecular oxygen, creating an electrochemical gradient over the inner membrane that drives transmembrane transport and the ATP synthase. Cytochrome c oxidase is the component of the respiratory chain that catalyzes the reduction of oxygen to water. Electrons originating from reduced cytochrome c in the intermembrane space (IMS) are transferred via the dinuclear copper A center (CU(A)) of subunit 2 and heme A of subunit 1 to the active site in subunit 1, a binuclear center (BNC) formed by heme A3 and copper B (CU(B)). The BNC reduces molecular oxygen to 2 water molecules using 4 electrons from cytochrome c in the IMS and 4 protons from the mitochondrial matrix. The polypeptide is Cytochrome c oxidase subunit 2 (MT-CO2) (Elephas maximus (Indian elephant)).